The following is a 618-amino-acid chain: MPNVQSLAIIVTDPRLIISTWKDRCPAPLSSVGGMPILARLVSQLAQAGVQKTIVFALDGIGDVKRILNNRMKRMELVIRIMPTPGSGRLIDLATITEIAEFHGQVLVFTENAVIDPSLIQRLLRSSDRNITVVSRSERRRCLRLLGDIGGRLTAMLPGDSPIRESASADVSPVGIYKFDPALLRAIARIRPHRFNDDLEFFETALGLQRHQIYLMYADPQHVRRVNDATDLEAANFASSSSGDQFSILERLQAGNWRYPASEHILLCNHHFPPASVVDRLRERLQDLLYLQPSDQLDIIAKLSEMTDLPARNLAVGNGVGELIKALYGYLDPRIVIPTPTSAQYIDAVEPNKVSRFELPPENFDLDVEAFANFAKRRQASVAVLVNPNNPTGRLVPVQEIEWLASQLAIEKCRLVVDETFIEFSVAGKGNSVEKLLSVFPKMVILKSLGAIMGLGGAQIGYLASKDEQLTHGVRRRLPLGNINGIAEYLLWILPEFREEWEASFRRTRADVVSFSRMLDTIPELEVHPSQANYLFCRTPEAWPSAKHVATMLAKRYGVLVQNCENQCMKYGDRYLRLTVLPYEENRYLVSALRRINEELVEWSTQSKRAGTAYHLGC.

It to Rhizobium NGR234A y4qD.

This is an uncharacterized protein from Sinorhizobium fredii (strain NBRC 101917 / NGR234).